A 2253-amino-acid polypeptide reads, in one-letter code: Genome polyprotein (2253 aa).

A disulfide bond links cysteine 627 and cysteine 694. The Cell attachment site signature appears at 750–752 (RVD). In terms of domain architecture, LRAT spans 825 to 920 (LVYKNRGFYK…LFPGRKEITQ (96 aa)). Residues histidine 835 and histidine 846 each act as for protein 2A H-NC in the active site. The For protein 2A H-NC; Acyl-thioester intermediate role is filled by cysteine 904. The chain crosses the membrane as a helical span at residues 1002–1022 (IVLYCHAPNMLTTMCLGTLLV). The region spanning 1205–1366 (YSEMMRVNVR…ASYSRNNKLD (162 aa)) is the SF3 helicase domain. Tyrosine 1559 bears the O-(5'-phospho-RNA)-tyrosine mark. The Peptidase C3 domain occupies 1586–1775 (APYMQDLEHC…RAAAVHFISN (190 aa)). Catalysis depends on for protease 3C activity residues histidine 1626, aspartate 1664, and cysteine 1739. The Acyl-thioester intermediate role is filled by cysteine 1970. Positions 2018–2132 (PYNYGLDYSS…SVSSPLDAEY (115 aa)) constitute a RdRp catalytic domain. Mg(2+)-binding residues include aspartate 2024 and aspartate 2118.

Belongs to the picornaviruses polyprotein family. As to quaternary structure, interacts with capsid protein VP1 and capsid protein VP3 to form heterotrimeric protomers. Five protomers subsequently associate to form pentamers which serve as building blocks for the capsid. Interacts with capsid protein VP0, and capsid protein VP3 to form heterotrimeric protomers. Five protomers subsequently associate to form pentamers which serve as building blocks for the capsid. In terms of assembly, interacts with capsid protein VP0 and capsid protein VP1 to form heterotrimeric protomers. Five protomers subsequently associate to form pentamers which serve as building blocks for the capsid. As to quaternary structure, homohexamer; forms a hexameric ring structure with 6-fold symmetry characteristic of AAA+ ATPases. Homodimer. Interacts with host ACBD3. In terms of assembly, interacts with RNA-directed RNA polymerase. As to quaternary structure, interacts with Viral protein genome-linked. Requires Mg(2+) as cofactor. In terms of processing, VPg is uridylylated by the polymerase and is covalently linked to the 5'-end of genomic RNA. This uridylylated form acts as a nucleotide-peptide primer for the polymerase. Specific enzymatic cleavages yield mature proteins. All cleavages are catalyzed by P3C.

The protein resides in the virion. It localises to the host cytoplasm. It is found in the host nucleus. Its subcellular location is the host nucleolus. The protein localises to the host cytoplasmic vesicle membrane. The protein resides in the host endoplasmic reticulum membrane. It localises to the host Golgi apparatus membrane. It catalyses the reaction RNA(n) + a ribonucleoside 5'-triphosphate = RNA(n+1) + diphosphate. The enzyme catalyses a ribonucleoside 5'-triphosphate + H2O = a ribonucleoside 5'-diphosphate + phosphate + H(+). It carries out the reaction Selective cleavage of Gln-|-Gly bond in the poliovirus polyprotein. In other picornavirus reactions Glu may be substituted for Gln, and Ser or Thr for Gly.. Forms an icosahedral capsid of pseudo T=3 symmetry together with capsid proteins VP1 and VP3. The capsid is 300 Angstroms in diameter, composed of 60 copies of each capsid protein and enclosing the viral positive strand RNA genome. The attachment to the host cell receptor induces virion internalization predominantly through clathrin-mediated endocytosis. Binds packaging signals present in the viral RNA. In terms of biological role, forms an icosahedral capsid of pseudo T=3 symmetry together with capsid proteins VP0 and VP1. The capsid is 300 Angstroms in diameter, composed of 60 copies of each capsid protein and enclosing the viral positive strand RNA genome. The attachment to the host cell receptor induces virion internalization predominantly through clathrin-mediated endocytosis. Binds packaging signals present in the viral RNA. Functionally, forms an icosahedral capsid of pseudo T=3 symmetry together with capsid proteins VP0 and VP3. The capsid is 300 Angstroms in diameter, composed of 60 copies of each capsid protein and enclosing the viral positive strand RNA genome. The attachment to the host cell receptor induces virion internalization predominantly through clathrin-mediated endocytosis. Binds packaging signals present in the viral RNA. Its function is as follows. Mediates self-processing of the polyprotein by a translational effect termed 'ribosome skipping'. Mechanistically, 2A1-mediated cleavage occurs between the C-terminal glycine and the proline of the downstream protein 2A2. Plays an essential role in the virus replication cycle by acting as a viroporin. Creates a pore in the host endoplasmic reticulum and as a consequence releases Ca2+ in the cytoplasm of infected cell. In turn, high levels of cytoplasmic calcium may trigger membrane trafficking and transport of viral ER-associated proteins to viroplasms, sites of viral genome replication. In terms of biological role, induces and associates with structural rearrangements of intracellular membranes. Displays RNA-binding, nucleotide binding and NTPase activities. May play a role in virion morphogenesis and viral RNA encapsidation by interacting with the capsid protein VP3. Functionally, localizes the viral replication complex to the surface of membranous vesicles. It inhibits host cell endoplasmic reticulum-to-Golgi apparatus transport and causes the disassembly of the Golgi complex, possibly through GBF1 interaction. This would result in depletion of MHC, trail receptors and IFN receptors at the host cell surface. Plays an essential role in viral RNA replication by recruiting ACBD3 and PI4KB at the viral replication sites, thereby allowing the formation of the rearranged membranous structures where viral replication takes place. Its function is as follows. Acts as a primer for viral RNA replication and remains covalently bound to viral genomic RNA. VPg is uridylylated prior to priming replication into VPg-pUpU. The VPg-pUpU is then used as primer on the genomic RNA poly(A) by the RNA-dependent RNA polymerase to replicate the viral genome. Following genome release from the infecting virion in the cytoplasm, the VPg-RNA linkage is probably removed by host TDP2. During the late stage of the replication cycle, host TDP2 is excluded from sites of viral RNA synthesis and encapsidation, allowing for the generation of progeny virions. Cysteine protease that generates mature viral proteins from the precursor polyprotein. In addition to its proteolytic activity, it binds to viral RNA, and thus influences viral genome replication. RNA and substrate bind cooperatively to the protease. In terms of biological role, replicates the viral genomic RNA on the surface of intracellular membranes. Covalently attaches UMP to a tyrosine of VPg, which is used to prime RNA synthesis. The positive stranded RNA genome is first replicated at virus induced membranous vesicles, creating a dsRNA genomic replication form. This dsRNA is then used as template to synthesize positive stranded RNA genomes. ss(+)RNA genomes are either translated, replicated or encapsidated. The protein is Genome polyprotein of Ljunganvirus 1 (LV).